The following is a 377-amino-acid chain: Nitric oxide reductase FlRd-NAD(+) reductase (377 aa).

This sequence belongs to the FAD-dependent oxidoreductase family. It depends on FAD as a cofactor.

The protein localises to the cytoplasm. The catalysed reaction is 2 reduced [nitric oxide reductase rubredoxin domain] + NAD(+) + H(+) = 2 oxidized [nitric oxide reductase rubredoxin domain] + NADH. It functions in the pathway nitrogen metabolism; nitric oxide reduction. Its function is as follows. One of at least two accessory proteins for anaerobic nitric oxide (NO) reductase. Reduces the rubredoxin moiety of NO reductase. This chain is Nitric oxide reductase FlRd-NAD(+) reductase, found in Escherichia coli (strain K12 / MC4100 / BW2952).